A 504-amino-acid polypeptide reads, in one-letter code: Ectoine/proline transporter ProP (504 aa).

11 consecutive transmembrane segments (helical) span residues 41–61 (FMEW…TAVF), 71–91 (LLAV…GGLV), 118–138 (LIGL…LLYL), 169–189 (FFGA…ASVV), 207–227 (DFGW…AVYL), 272–292 (LLIG…LTSY), 309–329 (AAVT…VGMW), 337–357 (PVYA…FLIM), 362–382 (IGAV…YVAL), 399–419 (GMGI…PLIT), and 430–450 (IVPA…LLFM). The segment at 477–504 (NQDEDPNIDLSHMPFPDEENVGAEKQNA) is disordered.

Belongs to the major facilitator superfamily.

It is found in the cell membrane. With respect to regulation, uptake is activated by osmotic stress. Inhibited by CCCP. Involved in the uptake of osmoprotectants. Can transport ectoine and proline. Protons are probably the coupling ions. The sequence is that of Ectoine/proline transporter ProP from Corynebacterium glutamicum (strain ATCC 13032 / DSM 20300 / JCM 1318 / BCRC 11384 / CCUG 27702 / LMG 3730 / NBRC 12168 / NCIMB 10025 / NRRL B-2784 / 534).